A 165-amino-acid polypeptide reads, in one-letter code: 2-C-methyl-D-erythritol 2,4-cyclodiphosphate synthase (165 aa).

Residues Asp9 and His11 each coordinate a divalent metal cation. Residues 9-11 (DVH) and 35-36 (HS) contribute to the 4-CDP-2-C-methyl-D-erythritol 2-phosphate site. His43 is a binding site for a divalent metal cation. 4-CDP-2-C-methyl-D-erythritol 2-phosphate contacts are provided by residues 57 to 59 (DIG), 101 to 107 (AQAPKML), 133 to 136 (TTTE), Phe140, and Arg143.

The protein belongs to the IspF family. Homotrimer. The cofactor is a divalent metal cation.

The catalysed reaction is 4-CDP-2-C-methyl-D-erythritol 2-phosphate = 2-C-methyl-D-erythritol 2,4-cyclic diphosphate + CMP. The protein operates within isoprenoid biosynthesis; isopentenyl diphosphate biosynthesis via DXP pathway; isopentenyl diphosphate from 1-deoxy-D-xylulose 5-phosphate: step 4/6. Involved in the biosynthesis of isopentenyl diphosphate (IPP) and dimethylallyl diphosphate (DMAPP), two major building blocks of isoprenoid compounds. Catalyzes the conversion of 4-diphosphocytidyl-2-C-methyl-D-erythritol 2-phosphate (CDP-ME2P) to 2-C-methyl-D-erythritol 2,4-cyclodiphosphate (ME-CPP) with a corresponding release of cytidine 5-monophosphate (CMP). This is 2-C-methyl-D-erythritol 2,4-cyclodiphosphate synthase from Pseudoalteromonas translucida (strain TAC 125).